Consider the following 389-residue polypeptide: Glutamate 5-kinase (389 aa).

Lys16 lines the ATP pocket. Substrate contacts are provided by Ser56, Asp143, and Asn155. 175–176 contacts ATP; the sequence is SD. The region spanning 281-358 is the PUA domain; that stretch reads AGGLHVDDGA…AEIEAILGYP (78 aa).

The protein belongs to the glutamate 5-kinase family.

The protein resides in the cytoplasm. The catalysed reaction is L-glutamate + ATP = L-glutamyl 5-phosphate + ADP. The protein operates within amino-acid biosynthesis; L-proline biosynthesis; L-glutamate 5-semialdehyde from L-glutamate: step 1/2. Functionally, catalyzes the transfer of a phosphate group to glutamate to form L-glutamate 5-phosphate. This is Glutamate 5-kinase from Rhizobium leguminosarum bv. trifolii (strain WSM2304).